We begin with the raw amino-acid sequence, 359 residues long: N-acetyl-gamma-glutamyl-phosphate reductase (359 aa).

C162 is an active-site residue.

Belongs to the NAGSA dehydrogenase family. Type 1 subfamily.

The protein resides in the cytoplasm. The catalysed reaction is N-acetyl-L-glutamate 5-semialdehyde + phosphate + NADP(+) = N-acetyl-L-glutamyl 5-phosphate + NADPH + H(+). It participates in amino-acid biosynthesis; L-arginine biosynthesis; N(2)-acetyl-L-ornithine from L-glutamate: step 3/4. Its function is as follows. Catalyzes the NADPH-dependent reduction of N-acetyl-5-glutamyl phosphate to yield N-acetyl-L-glutamate 5-semialdehyde. In Prochlorococcus marinus (strain NATL2A), this protein is N-acetyl-gamma-glutamyl-phosphate reductase.